Reading from the N-terminus, the 138-residue chain is Cellular retinoic acid-binding protein 2 (138 aa).

Positions 21 to 31 match the Nuclear localization signal motif; sequence KVLGVNVMLRK. Residue lysine 102 forms a Glycyl lysine isopeptide (Lys-Gly) (interchain with G-Cter in SUMO) linkage. All-trans-retinoate is bound at residue 133 to 135; it reads RVY.

This sequence belongs to the calycin superfamily. Fatty-acid binding protein (FABP) family. As to quaternary structure, interacts with RXR and RARA. Interacts with importin alpha. In terms of processing, sumoylated in response to retinoic acid binding, sumoylation is critical for dissociation from ER and subsequent nuclear translocation.

It localises to the cytoplasm. It is found in the endoplasmic reticulum. The protein localises to the nucleus. Functionally, transports retinoic acid to the nucleus. Regulates the access of retinoic acid to the nuclear retinoic acid receptors. The sequence is that of Cellular retinoic acid-binding protein 2 (CRABP2) from Homo sapiens (Human).